The following is a 978-amino-acid chain: Regulator of MON1-CCZ1 complex homolog (978 aa).

Low complexity-rich tracts occupy residues 311 to 351 (TSTP…MISS) and 479 to 495 (NNNNNNNNNNNNNNNNN). 4 disordered regions span residues 311–363 (TSTP…HKEQ), 474–546 (SINQ…NSKT), 558–665 (KQQQ…NNHV), and 703–727 (EKEKENDNNNNNTNNNTNNNNNNNI). A compositionally biased stretch (polar residues) spans 496-515 (TAQTLNSTGNLSNSISIGGM). Positions 516–539 (NTSTDNLTTTTTTSSSISSSPSNS) are enriched in low complexity. Positions 582 to 591 (GDGGSGGSGG) are enriched in gly residues. Composition is skewed to low complexity over residues 592 to 663 (SFYN…NNNN) and 710 to 727 (NNNNNTNNNTNNNNNNNI). In terms of domain architecture, Mic1 spans 735 to 908 (KLELDSKYLI…HPSFDKYIKL (174 aa)). A disordered region spans residues 955–978 (NNSSPTLRSSNSLNSSPRLQYSNN).

Belongs to the RMC1 family.

It is found in the lysosome membrane. Its subcellular location is the late endosome membrane. In terms of biological role, may have a role in autophagy. The sequence is that of Regulator of MON1-CCZ1 complex homolog from Dictyostelium discoideum (Social amoeba).